Consider the following 350-residue polypeptide: Beta-hexosaminidase (350 aa).

Residues Asp62, Arg70, Arg133, and 163 to 164 each bind substrate; that span reads KH. The Proton donor/acceptor role is filled by His176. Asp248 functions as the Nucleophile in the catalytic mechanism.

This sequence belongs to the glycosyl hydrolase 3 family. NagZ subfamily.

It localises to the cytoplasm. The enzyme catalyses Hydrolysis of terminal non-reducing N-acetyl-D-hexosamine residues in N-acetyl-beta-D-hexosaminides.. It functions in the pathway cell wall biogenesis; peptidoglycan recycling. Its function is as follows. Plays a role in peptidoglycan recycling by cleaving the terminal beta-1,4-linked N-acetylglucosamine (GlcNAc) from peptide-linked peptidoglycan fragments, giving rise to free GlcNAc, anhydro-N-acetylmuramic acid and anhydro-N-acetylmuramic acid-linked peptides. This is Beta-hexosaminidase from Haemophilus influenzae (strain PittEE).